A 1379-amino-acid chain; its full sequence is DNA-directed RNA polymerase subunit beta (1379 aa).

It belongs to the RNA polymerase beta chain family. The RNAP catalytic core consists of 2 alpha, 1 beta, 1 beta' and 1 omega subunit. When a sigma factor is associated with the core the holoenzyme is formed, which can initiate transcription.

The catalysed reaction is RNA(n) + a ribonucleoside 5'-triphosphate = RNA(n+1) + diphosphate. In terms of biological role, DNA-dependent RNA polymerase catalyzes the transcription of DNA into RNA using the four ribonucleoside triphosphates as substrates. This Chelativorans sp. (strain BNC1) protein is DNA-directed RNA polymerase subunit beta.